Here is a 181-residue protein sequence, read N- to C-terminus: MIDTDGYRPNVGIIICNNNAQVLWAKRFGQHSWQFPQGGIKEGETPEQAMYRELYEEVGLKPEHVKLLATSRHWLRYKLPKRLVRWDSPDPVCIGQKQRWFLLQLISDEQQIEFEACGNPEFDAWRWVTYWYPVRQVVSFKCEVYRCALKEFSAVAFSLMKKSSDKKRNKRPRRASFYKKR.

Residues 6–150 form the Nudix hydrolase domain; that stretch reads GYRPNVGIII…KCEVYRCALK (145 aa). A Nudix box motif is present at residues 38-59; sequence GGIKEGETPEQAMYRELYEEVG.

The protein belongs to the Nudix hydrolase family. RppH subfamily. A divalent metal cation is required as a cofactor.

In terms of biological role, accelerates the degradation of transcripts by removing pyrophosphate from the 5'-end of triphosphorylated RNA, leading to a more labile monophosphorylated state that can stimulate subsequent ribonuclease cleavage. The sequence is that of RNA pyrophosphohydrolase from Psychromonas ingrahamii (strain DSM 17664 / CCUG 51855 / 37).